The chain runs to 392 residues: L-rhamnonate dehydratase (392 aa).

Positions 22 and 48 each coordinate substrate. Positions 214, 240, and 268 each coordinate Mg(2+). His-318 serves as the catalytic Proton acceptor. Glu-338 lines the substrate pocket.

It belongs to the mandelate racemase/muconate lactonizing enzyme family. RhamD subfamily. In terms of assembly, homooctamer; tetramer of dimers. The cofactor is Mg(2+).

It carries out the reaction L-rhamnonate = 2-dehydro-3-deoxy-L-rhamnonate + H2O. Its function is as follows. Catalyzes the dehydration of L-rhamnonate to 2-keto-3-deoxy-L-rhamnonate (KDR). This Paraburkholderia xenovorans (strain LB400) protein is L-rhamnonate dehydratase.